The following is a 158-amino-acid chain: Single-stranded DNA-binding protein 2 (158 aa).

One can recognise an SSB domain in the interval 1–107 (MNETIVCVVG…IDALAVGHDL (107 aa)). The disordered stretch occupies residues 109-158 (RGTSAFRRPSAKDGEAGVSPAARPEPNWETEPGSQPSVEHQPQPEPAGVT).

Homotetramer.

In Streptomyces avermitilis (strain ATCC 31267 / DSM 46492 / JCM 5070 / NBRC 14893 / NCIMB 12804 / NRRL 8165 / MA-4680), this protein is Single-stranded DNA-binding protein 2 (ssb2).